The primary structure comprises 220 residues: Photosynthetic NDH subunit of lumenal location 3, chloroplastic (220 aa).

The transit peptide at 1 to 35 directs the protein to the chloroplast; the sequence is MAHFIDLNSLTNTLPSLPKLPESRKTGKSSGFACR. A thylakoid-targeting transit peptide spans 36–77; it reads RTEEFQEPDSVQITRRMTLGFAVSIGLTGILGENNVSLAQDN.

Belongs to the PsbQ family. As to quaternary structure, part of the chloroplast NDH complex, composed of a mixture of chloroplast and nucleus encoded subunits. Component of the NDH lumenal subcomplex, at least composed of PnsL1, PnsL2, PnsL3, PnsL4 and PnsL5.

It is found in the plastid. The protein localises to the chloroplast thylakoid membrane. NDH shuttles electrons from NAD(P)H:plastoquinone, via FMN and iron-sulfur (Fe-S) centers, to quinones in the photosynthetic chain and possibly in a chloroplast respiratory chain. The immediate electron acceptor for the enzyme in this species is believed to be plastoquinone. Couples the redox reaction to proton translocation, and thus conserves the redox energy in a proton gradient. Required for both formation and activity of the chloroplast NAD(P)H dehydrogenase (NDH) complex. The sequence is that of Photosynthetic NDH subunit of lumenal location 3, chloroplastic from Arabidopsis thaliana (Mouse-ear cress).